The primary structure comprises 257 residues: Nopaline permease ATP-binding protein P (257 aa).

Residues 8–253 (LVAEDVHKNF…PTSPRCRAFL (246 aa)) enclose the ABC transporter domain. 40 to 47 (GSSGSGKS) serves as a coordination point for ATP.

The protein belongs to the ABC transporter superfamily.

It is found in the cell inner membrane. Its function is as follows. Component of the nopaline active transport system probably consisting of four subunits: Q, M, P and T. This system is also capable of transporting octopine provided that catabolic functions are induced with nopaline. The chain is Nopaline permease ATP-binding protein P (nocP) from Agrobacterium fabrum (strain C58 / ATCC 33970) (Agrobacterium tumefaciens (strain C58)).